A 248-amino-acid chain; its full sequence is ATP synthase subunit a (248 aa).

The next 6 membrane-spanning stretches (helical) occupy residues I25 to M45, F83 to I103, L113 to A133, L142 to I162, F192 to G212, and I215 to L235.

The protein belongs to the ATPase A chain family. As to quaternary structure, F-type ATPases have 2 components, CF(1) - the catalytic core - and CF(0) - the membrane proton channel. CF(1) has five subunits: alpha(3), beta(3), gamma(1), delta(1), epsilon(1). CF(0) has four main subunits: a, b, b' and c.

The protein resides in the cell inner membrane. Functionally, key component of the proton channel; it plays a direct role in the translocation of protons across the membrane. The protein is ATP synthase subunit a of Rhodopseudomonas palustris (strain HaA2).